A 696-amino-acid polypeptide reads, in one-letter code: C2 domain-containing protein 2 (696 aa).

Residues 8-28 (VQWLFLVSLFVAALGTVGLYL) traverse the membrane as a helical segment. Residues 45–238 (EPDELRRRES…PTQVKEAQSL (194 aa)) enclose the SMP-LBD domain. S54 is subject to Phosphoserine. The C2 domain occupies 241–357 (PSSTAQEPCP…RKQPNGPQTF (117 aa)). S436 carries the post-translational modification Phosphoserine. At T440 the chain carries Phosphothreonine. A disordered region spans residues 551–611 (ATEASATTPP…DGDELSESSL (61 aa)). Over residues 573 to 588 (KPRENDLDSWELEKES) the composition is skewed to basic and acidic residues. A Phosphoserine modification is found at S581.

It is found in the membrane. This is C2 domain-containing protein 2 from Mus musculus (Mouse).